A 185-amino-acid polypeptide reads, in one-letter code: Homeobox expressed in ES cells 1 (185 aa).

Residues 32–69 are disordered; that stretch reads KKDCTTSVRPHRPWTDTCGDSEKGGNPPLHAPDLPSET. The segment at residues 108–167 is a DNA-binding region (homeobox); that stretch reads GRRPRTAFTQNQVEVLENVFRVNCYPGIDIREDLAQKLNLEEDRIQIWFQNRRAKMKRSR.

It belongs to the ANF homeobox family. Can form heterodimers with PROP1 in binding to DNA Interacts with TLE1. As to expression, high levels found in the embryonic liver, lower level expression seen in the viscera, amnion and yolk sac.

It localises to the nucleus. In terms of biological role, required for the normal development of the forebrain, eyes and other anterior structures such as the olfactory placodes and pituitary gland. Possible transcriptional repressor. Binds to the palindromic PIII sequence, 5'-AGCTTGAGTCTAATTGAATTAACTGTAC-3'. HESX1 and PROP1 bind as heterodimers on this palindromic site, and, in vitro, HESX1 can antagonize PROP1 activation. The protein is Homeobox expressed in ES cells 1 (Hesx1) of Mus musculus (Mouse).